We begin with the raw amino-acid sequence, 318 residues long: Ribosomal RNA small subunit methyltransferase H (318 aa).

Residues G37 to H39, D56, Y83, D104, and Q111 each bind S-adenosyl-L-methionine. The segment at E293–E318 is disordered.

It belongs to the methyltransferase superfamily. RsmH family.

The protein localises to the cytoplasm. It catalyses the reaction cytidine(1402) in 16S rRNA + S-adenosyl-L-methionine = N(4)-methylcytidine(1402) in 16S rRNA + S-adenosyl-L-homocysteine + H(+). Functionally, specifically methylates the N4 position of cytidine in position 1402 (C1402) of 16S rRNA. This is Ribosomal RNA small subunit methyltransferase H from Streptomyces avermitilis (strain ATCC 31267 / DSM 46492 / JCM 5070 / NBRC 14893 / NCIMB 12804 / NRRL 8165 / MA-4680).